Reading from the N-terminus, the 373-residue chain is MEKARISIRQLFVMIIIFELGSSLLITPGSMAGRDAWIAVLLGCAIGLFLFYLYQGIYQCYPNSSPKEYMDDMLGTKLSWLFSFLYILYFAYIAARVLRDFGEMLLTFAYHDTPIIIVNALLMVVSIYAVRKGIEVLARAAELLFGAMYLLGAIGLVLIIVSGTIDPHNLKPVLANGISPVLHSVFTQTMYVPFGEVVLFVMIFPNLNDRKDVKKMGMIAMAISGLIVALTVAINISVLDVDLTLRSQFPLLSTIQTIKVEEFLDRLDVFFMLALIIGGFFKVSLYLYATVVGTSTLFKEKNPSQLAYPMGLGILILSITIATNFSEHLNEGLNVVPLYIHLPFQLLFPLFLFIVAVWKKKRREKSKGEEAKK.

10 helical membrane-spanning segments follow: residues 11–31 (LFVMIIIFELGSSLLITPGSM), 37–57 (WIAVLLGCAIGLFLFYLYQGI), 78–98 (LSWLFSFLYILYFAYIAARVL), 105–125 (LLTFAYHDTPIIIVNALLMVV), 143–163 (LLFGAMYLLGAIGLVLIIVSG), 185–205 (VFTQTMYVPFGEVVLFVMIFP), 219–239 (IAMAISGLIVALTVAINISVL), 269–289 (VFFMLALIIGGFFKVSLYLYA), 306–326 (LAYPMGLGILILSITIATNFS), and 338–358 (LYIHLPFQLLFPLFLFIVAVW).

This sequence belongs to the amino acid-polyamine-organocation (APC) superfamily. Spore germination protein (SGP) (TC 2.A.3.9) family.

The protein localises to the cell membrane. Functionally, involved in the germination response to the combination of glucose, fructose, L-asparagine, and KCl. This chain is Spore germination protein KB (gerKB), found in Bacillus subtilis (strain 168).